The sequence spans 201 residues: Holliday junction branch migration complex subunit RuvA (201 aa).

Positions Met-1–Leu-64 are domain I. Residues Ser-65–His-143 form a domain II region. The flexible linker stretch occupies residues Ile-144 to Ser-153. Residues Ser-153–Val-201 form a domain III region.

The protein belongs to the RuvA family. Homotetramer. Forms an RuvA(8)-RuvB(12)-Holliday junction (HJ) complex. HJ DNA is sandwiched between 2 RuvA tetramers; dsDNA enters through RuvA and exits via RuvB. An RuvB hexamer assembles on each DNA strand where it exits the tetramer. Each RuvB hexamer is contacted by two RuvA subunits (via domain III) on 2 adjacent RuvB subunits; this complex drives branch migration. In the full resolvosome a probable DNA-RuvA(4)-RuvB(12)-RuvC(2) complex forms which resolves the HJ.

The protein resides in the cytoplasm. The RuvA-RuvB-RuvC complex processes Holliday junction (HJ) DNA during genetic recombination and DNA repair, while the RuvA-RuvB complex plays an important role in the rescue of blocked DNA replication forks via replication fork reversal (RFR). RuvA specifically binds to HJ cruciform DNA, conferring on it an open structure. The RuvB hexamer acts as an ATP-dependent pump, pulling dsDNA into and through the RuvAB complex. HJ branch migration allows RuvC to scan DNA until it finds its consensus sequence, where it cleaves and resolves the cruciform DNA. The sequence is that of Holliday junction branch migration complex subunit RuvA from Protochlamydia amoebophila (strain UWE25).